Consider the following 61-residue polypeptide: MALDGSSGGGSNVETLLIVAIIVVIMAIMLYYFWWMPRQQKKCSKAEECTCNNGSCSLKTS.

A helical transmembrane segment spans residues 16 to 36 (LLIVAIIVVIMAIMLYYFWWM).

It belongs to the asfivirus inner membrane protein p12 family. In terms of assembly, homomultimer; disulfide-linked. In terms of processing, not glycosylated.

It localises to the virion membrane. The chain is Inner membrane protein p12 from Ornithodoros (relapsing fever ticks).